Reading from the N-terminus, the 429-residue chain is 4-hydroxy-3-methylbut-2-en-1-yl diphosphate synthase (flavodoxin) (429 aa).

4 residues coordinate [4Fe-4S] cluster: C323, C326, C369, and E376.

This sequence belongs to the IspG family. It depends on [4Fe-4S] cluster as a cofactor.

It catalyses the reaction (2E)-4-hydroxy-3-methylbut-2-enyl diphosphate + oxidized [flavodoxin] + H2O + 2 H(+) = 2-C-methyl-D-erythritol 2,4-cyclic diphosphate + reduced [flavodoxin]. It participates in isoprenoid biosynthesis; isopentenyl diphosphate biosynthesis via DXP pathway; isopentenyl diphosphate from 1-deoxy-D-xylulose 5-phosphate: step 5/6. Converts 2C-methyl-D-erythritol 2,4-cyclodiphosphate (ME-2,4cPP) into 1-hydroxy-2-methyl-2-(E)-butenyl 4-diphosphate. In Wolbachia sp. subsp. Brugia malayi (strain TRS), this protein is 4-hydroxy-3-methylbut-2-en-1-yl diphosphate synthase (flavodoxin).